The following is a 427-amino-acid chain: DNA topoisomerase 6 subunit A (427 aa).

Residues 76 to 209 (LSLSSVQTEI…LNVIAAEKGV (134 aa)) form the Topo IIA-type catalytic domain. Residue Y170 is the O-(5'-phospho-DNA)-tyrosine intermediate of the active site. Mg(2+) contacts are provided by E256 and D308.

This sequence belongs to the TOP6A family. As to quaternary structure, homodimer. Heterotetramer of two TOP6A and two TOP6B subunits. Interacts with BIN4 and RHL1. Requires Mg(2+) as cofactor. Highly expressed in leaves, stems, flowers and seedlings.

The protein localises to the nucleus. It carries out the reaction ATP-dependent breakage, passage and rejoining of double-stranded DNA.. Functionally, component of the DNA topoisomerase VI involved in chromatin organization and progression of endoreduplication cycles. Relaxes both positive and negative superturns and exhibits a strong decatenase activity. Involved in cell-elongation processes. In Arabidopsis thaliana (Mouse-ear cress), this protein is DNA topoisomerase 6 subunit A.